A 319-amino-acid polypeptide reads, in one-letter code: Thioredoxin reductase (319 aa).

FAD is bound by residues Ser11 to Ala14, Ile40 to Ala41, Gln45, Asn54, Val87, Cys145, Asp288, and Arg295 to Ala297. A disulfide bridge connects residues Cys142 and Cys145.

Belongs to the class-II pyridine nucleotide-disulfide oxidoreductase family. As to quaternary structure, homodimer. FAD serves as cofactor.

The protein localises to the cytoplasm. It carries out the reaction [thioredoxin]-dithiol + NADP(+) = [thioredoxin]-disulfide + NADPH + H(+). The protein is Thioredoxin reductase (TRR1) of Yarrowia lipolytica (strain CLIB 122 / E 150) (Yeast).